The primary structure comprises 526 residues: Na(+)/H(+) antiporter NhaB (526 aa).

The next 12 helical transmembrane spans lie at 25–45, 52–72, 89–109, 130–164, 204–224, 242–262, 305–325, 350–370, 391–411, 448–468, 479–499, and 505–525; these read ILLF…AAGW, IFTL…LLAI, LVAN…IYFM, LSLA…FYAI, LMMH…VGEP, IRMA…CILV, AVIA…VGLI, QEAL…AVII, LALF…VFVG, VATP…LAPL, MALP…ELLL, and WFYQ…LPAL.

The protein belongs to the NhaB Na(+)/H(+) (TC 2.A.34) antiporter family.

It localises to the cell inner membrane. The catalysed reaction is 2 Na(+)(in) + 3 H(+)(out) = 2 Na(+)(out) + 3 H(+)(in). Na(+)/H(+) antiporter that extrudes sodium in exchange for external protons. This is Na(+)/H(+) antiporter NhaB from Aeromonas salmonicida (strain A449).